The chain runs to 448 residues: Methylenetetrahydrofolate--tRNA-(uracil-5-)-methyltransferase TrmFO (448 aa).

Residue 13–18 (GAGLAG) coordinates FAD.

The protein belongs to the MnmG family. TrmFO subfamily. The cofactor is FAD.

The protein localises to the cytoplasm. It catalyses the reaction uridine(54) in tRNA + (6R)-5,10-methylene-5,6,7,8-tetrahydrofolate + NADH + H(+) = 5-methyluridine(54) in tRNA + (6S)-5,6,7,8-tetrahydrofolate + NAD(+). The enzyme catalyses uridine(54) in tRNA + (6R)-5,10-methylene-5,6,7,8-tetrahydrofolate + NADPH + H(+) = 5-methyluridine(54) in tRNA + (6S)-5,6,7,8-tetrahydrofolate + NADP(+). Functionally, catalyzes the folate-dependent formation of 5-methyl-uridine at position 54 (M-5-U54) in all tRNAs. The chain is Methylenetetrahydrofolate--tRNA-(uracil-5-)-methyltransferase TrmFO from Streptococcus pyogenes serotype M6 (strain ATCC BAA-946 / MGAS10394).